We begin with the raw amino-acid sequence, 62 residues long: Large ribosomal subunit protein bL28 (62 aa).

It belongs to the bacterial ribosomal protein bL28 family.

This chain is Large ribosomal subunit protein bL28, found in Staphylococcus epidermidis (strain ATCC 12228 / FDA PCI 1200).